Here is a 462-residue protein sequence, read N- to C-terminus: Neuronal acetylcholine receptor subunit non-alpha-2 (462 aa).

A signal peptide spans 1 to 30 (MTLAVIGLFTLFTSIIAITPAREFVSLAER). The Extracellular segment spans residues 31 to 234 (EDALLRELFQ…ITYSFILKRL (204 aa)). 2 N-linked (GlcNAc...) asparagine glycosylation sites follow: Asn-53 and Asn-168. Cys-155 and Cys-169 are oxidised to a cystine. The next 3 membrane-spanning stretches (helical) occupy residues 235–259 (PLFY…VFYL), 267–284 (VSLS…LLVI), and 301–322 (YLLF…VINV). Residues 323–428 (HHRSSATYHP…WKFVAQVLDR (106 aa)) lie on the Cytoplasmic side of the membrane. The span at 362–372 (ELEPHSPDLKP) shows a compositional bias: basic and acidic residues. Positions 362–384 (ELEPHSPDLKPRNKKGPPGPEGE) are disordered. A helical membrane pass occupies residues 429 to 446 (IFLWTFLTVSVLGTILIF).

This sequence belongs to the ligand-gated ion channel (TC 1.A.9) family. Acetylcholine receptor (TC 1.A.9.1) subfamily. In terms of assembly, neuronal AChR seems to be composed of two different type of subunits: alpha and beta.

The protein localises to the postsynaptic cell membrane. It is found in the cell membrane. Functionally, after binding acetylcholine, the AChR responds by an extensive change in conformation that affects all subunits and leads to opening of an ion-conducting channel across the plasma membrane. This Carassius auratus (Goldfish) protein is Neuronal acetylcholine receptor subunit non-alpha-2.